We begin with the raw amino-acid sequence, 463 residues long: Oxidoreductase OXR1 (463 aa).

6-hydroxy-FAD is bound by residues 59–63 (GGSYS), valine 154, and aspartate 366.

The protein belongs to the FAD-dependent oxidoreductase family. 6-hydroxy-FAD serves as cofactor.

Its pathway is siderophore biosynthesis. Functionally, oxidoreductase; part of the gene cluster that mediates the biosynthesis of hydroxamate-containing siderophores that play a critical role in virulence via intracellular iron acquisition during macrophage infection. The sequence is that of Oxidoreductase OXR1 from Ajellomyces capsulatus (Darling's disease fungus).